Here is a 333-residue protein sequence, read N- to C-terminus: Alpha-N-acetylgalactosaminide alpha-2,6-sialyltransferase 6 (333 aa).

Over residues 1–12 (MACSRPPSQCEP) the composition is skewed to polar residues. Residues 1-26 (MACSRPPSQCEPTSLPPGPPAGRRHL) form a disordered region. Over 1–43 (MACSRPPSQCEPTSLPPGPPAGRRHLPLSRRRREMSSNKEQRS) the chain is Cytoplasmic. A helical; Signal-anchor for type II membrane protein membrane pass occupies residues 44 to 64 (AVFVILFALITILILYSSNSA). Residues 65-333 (NEVFHYGSLR…GITFSHPSWT (269 aa)) are Lumenal-facing. Asparagine 98 carries an N-linked (GlcNAc...) asparagine glycan. The cysteines at positions 108 and 256 are disulfide-linked.

The protein belongs to the glycosyltransferase 29 family. In terms of tissue distribution, expressed in kidney, in proximal tubule epithelial cells. Expressed in colon cell lines.

Its subcellular location is the golgi apparatus membrane. It carries out the reaction a ganglioside GM1b (d18:1(4E)) + CMP-N-acetyl-beta-neuraminate = a ganglioside GD1alpha (d18:1(4E)) + CMP + H(+). The enzyme catalyses N-acetyl-alpha-neuraminosyl-(2-&gt;3)-beta-D-galactosyl-(1-&gt;3)-N-acetyl-beta-D-glucosaminyl-(1-&gt;3)-beta-D-galactosyl-(1-&gt;4)-beta-D-glucosyl-(1&lt;-&gt;1')-N-acyl-sphing-4-enine + CMP-N-acetyl-beta-neuraminate = N-acetyl-alpha-neuraminosyl-(2-&gt;3)-beta-D-galactosyl-(1-&gt;3)-[N-acetyl-alpha-neuraminosyl-(2-&gt;6)]-N-acetyl-beta-D-glucosaminyl-(1-&gt;3)-beta-D-galactosyl-(1-&gt;4)-beta-D-glucosyl-(1&lt;-&gt;1')-N-acyl-sphing-4-enine + CMP + H(+). It catalyses the reaction a globoside MSGG + CMP-N-acetyl-beta-neuraminate = a globoside DSGG + CMP + H(+). The catalysed reaction is a ganglioside GD1a (d18:1(4E)) + CMP-N-acetyl-beta-neuraminate = a ganglioside GT1aalpha (d18:1(4E)) + CMP + H(+). It carries out the reaction a ganglioside GT1b (d18:1(4E)) + CMP-N-acetyl-beta-neuraminate = a ganglioside GQ1balpha (d18:1(4E)) + CMP + H(+). The enzyme catalyses 3-O-[alpha-Neu5Ac-(2-&gt;3)-beta-D-Gal-(1-&gt;3)-alpha-D-GalNAc]-L-Ser-[protein] + CMP-N-acetyl-beta-neuraminate = a 3-O-{alpha-Neu5Ac-(2-&gt;3)-beta-D-Gal-(1-&gt;3)-[alpha-Neu5Ac-(2-&gt;6)]-alpha-D-GalNAc}-L-seryl-[protein] + CMP + H(+). It catalyses the reaction 3-O-[alpha-Neu5Ac-(2-&gt;3)-beta-D-Gal-(1-&gt;3)-alpha-D-GalNAc]-L-Thr-[protein] + CMP-N-acetyl-beta-neuraminate = a 3-O-{alpha-Neu5Ac-(2-&gt;3)-beta-D-Gal-(1-&gt;3)-[alpha-Neu5Ac-(2-&gt;6)]-alpha-D-GalNAc}-L-threonyl-[protein] + CMP + H(+). In terms of biological role, transfers the sialyl group (N-acetyl-alpha-neuraminyl or NeuAc) from CMP-NeuAc onto glycoproteins and glycolipids, forming an alpha-2,6-linkage. Produces branched type disialyl structures by transfer of a sialyl group onto the GalNAc or GlcNAc residue inside backbone core chains having a terminal sialic acid with an alpha-2,3-linkage on Gal. ST6GalNAcVI prefers glycolipids to glycoproteins, predominantly catalyzing the biosynthesis of ganglioside GD1alpha from GM1b. Besides GMb1, MSGG and other glycolipids, it shows activity towards sialyl Lc4Cer generating disialyl Lc4Cer, which can lead to the synthesis of disialyl Lewis a (Le(a)), suggested to be a cancer-associated antigen. Also has activity toward GD1a and GT1b, and can generate DSGG (disialylgalactosylgloboside) from MSGG (monosialylgalactosylgloboside). The protein is Alpha-N-acetylgalactosaminide alpha-2,6-sialyltransferase 6 (ST6GALNAC6) of Homo sapiens (Human).